A 426-amino-acid polypeptide reads, in one-letter code: Serine--tRNA ligase (426 aa).

Thr229 to Glu231 lines the L-serine pocket. ATP-binding positions include Arg260–Glu262 and Val276. Glu283 provides a ligand contact to L-serine. ATP is bound at residue Glu350–Ser353. Thr386 contacts L-serine.

It belongs to the class-II aminoacyl-tRNA synthetase family. Type-1 seryl-tRNA synthetase subfamily. In terms of assembly, homodimer. The tRNA molecule binds across the dimer.

The protein resides in the cytoplasm. The enzyme catalyses tRNA(Ser) + L-serine + ATP = L-seryl-tRNA(Ser) + AMP + diphosphate + H(+). It carries out the reaction tRNA(Sec) + L-serine + ATP = L-seryl-tRNA(Sec) + AMP + diphosphate + H(+). It participates in aminoacyl-tRNA biosynthesis; selenocysteinyl-tRNA(Sec) biosynthesis; L-seryl-tRNA(Sec) from L-serine and tRNA(Sec): step 1/1. Functionally, catalyzes the attachment of serine to tRNA(Ser). Is also able to aminoacylate tRNA(Sec) with serine, to form the misacylated tRNA L-seryl-tRNA(Sec), which will be further converted into selenocysteinyl-tRNA(Sec). The polypeptide is Serine--tRNA ligase (Rhodopirellula baltica (strain DSM 10527 / NCIMB 13988 / SH1)).